The sequence spans 853 residues: Thrombospondin type-1 domain-containing protein 1 (853 aa).

The first 24 residues, 1–24 (MKPMLKDFSNLLLVVLCDYVLGEA), serve as a signal peptide directing secretion. Residues 25–414 (EYLLLREPGH…QPQGPVKSNN (390 aa)) are Extracellular-facing. Residues asparagine 39, asparagine 53, asparagine 58, asparagine 69, asparagine 80, asparagine 135, and asparagine 304 are each glycosylated (N-linked (GlcNAc...) asparagine). The 54-residue stretch at 341 to 394 (IETWGLWQPWSQCSATCGDGVRERRRVCLTSFPSRPGCPGMSLEASLCSLEECA) folds into the TSP type-1 domain. 3 disulfides stabilise this stretch: cysteine 353/cysteine 388, cysteine 357/cysteine 393, and cysteine 368/cysteine 378. Residues 415-435 (IVTVTGISLCLFIIIATVLIT) traverse the membrane as a helical segment. Over 436-853 (LWRRFGRPAK…STLSVEKLVI (418 aa)) the chain is Cytoplasmic. Disordered regions lie at residues 445–518 (KCST…ESFQ), 624–650 (TLIRKSQARHVGSRGGPSERSHARNAH), 668–702 (ERSMSTLTPRQAPAYSTRTRTCEQAEDRFRPQSRG), and 714–800 (QEAS…RKDK). The residue at position 464 (serine 464) is a Phosphoserine. Polar residues predominate over residues 671 to 686 (MSTLTPRQAPAYSTRT). Basic and acidic residues predominate over residues 687–697 (RTCEQAEDRFR). A compositionally biased stretch (polar residues) spans 767-795 (SHKSVSRKQSSPTSPKDSYQRVSPLSPSQ).

As to quaternary structure, part of a complex composed of THSD1, PTK2/FAK1, TLN1 and VCL. Interacts with TLN1.

It is found in the endosome membrane. It localises to the cell junction. The protein resides in the focal adhesion. Is a positive regulator of nascent focal adhesion assembly, involved in the modulation of endothelial cell attachment to the extracellular matrix. This chain is Thrombospondin type-1 domain-containing protein 1 (THSD1), found in Pongo abelii (Sumatran orangutan).